The sequence spans 282 residues: Probable endonuclease 4 (282 aa).

Residues His-66, His-106, Glu-143, Asp-177, His-180, His-214, Asp-227, His-229, and Glu-259 each contribute to the Zn(2+) site.

This sequence belongs to the AP endonuclease 2 family. It depends on Zn(2+) as a cofactor.

It carries out the reaction Endonucleolytic cleavage to 5'-phosphooligonucleotide end-products.. Its function is as follows. Endonuclease IV plays a role in DNA repair. It cleaves phosphodiester bonds at apurinic or apyrimidinic (AP) sites, generating a 3'-hydroxyl group and a 5'-terminal sugar phosphate. This is Probable endonuclease 4 from Nitratidesulfovibrio vulgaris (strain ATCC 29579 / DSM 644 / CCUG 34227 / NCIMB 8303 / VKM B-1760 / Hildenborough) (Desulfovibrio vulgaris).